Reading from the N-terminus, the 567-residue chain is Maltase A2 (567 aa).

The first 23 residues, 1–23 (MPKWAHLGLAALLLISTTQEGTA), serve as a signal peptide directing secretion. N-linked (GlcNAc...) asparagine glycans are attached at residues N30, N124, and N198. Residue D226 is the Nucleophile of the active site. E298 (proton donor) is an active-site residue. N312 carries N-linked (GlcNAc...) asparagine glycosylation.

It belongs to the glycosyl hydrolase 13 family.

It carries out the reaction Hydrolysis of terminal, non-reducing (1-&gt;4)-linked alpha-D-glucose residues with release of alpha-D-glucose.. The protein is Maltase A2 (Mal-A2) of Drosophila melanogaster (Fruit fly).